Consider the following 283-residue polypeptide: 4-diphosphocytidyl-2-C-methyl-D-erythritol kinase (283 aa).

Residue lysine 10 is part of the active site. Proline 99–serine 109 provides a ligand contact to ATP. Aspartate 141 is a catalytic residue.

The protein belongs to the GHMP kinase family. IspE subfamily. As to quaternary structure, homodimer.

The catalysed reaction is 4-CDP-2-C-methyl-D-erythritol + ATP = 4-CDP-2-C-methyl-D-erythritol 2-phosphate + ADP + H(+). The protein operates within isoprenoid biosynthesis; isopentenyl diphosphate biosynthesis via DXP pathway; isopentenyl diphosphate from 1-deoxy-D-xylulose 5-phosphate: step 3/6. Its function is as follows. Catalyzes the phosphorylation of the position 2 hydroxy group of 4-diphosphocytidyl-2C-methyl-D-erythritol. The polypeptide is 4-diphosphocytidyl-2-C-methyl-D-erythritol kinase (Escherichia coli O7:K1 (strain IAI39 / ExPEC)).